Here is an 890-residue protein sequence, read N- to C-terminus: MLINWFKLISPKNRILKRATLAAKQVDALKDEMRALSDEQLFNKTEYFINELKNNKTTDDILVEAFAVIREVVYRETGNFAYLVQLIGAYVVHQGDFSEMMTGEGKTLTLVLAAYLNMLEKKGVHIVTVNEYLAERDAEQARRIFARLNLTVGCNKANLAPHLKKEAFDCDLTYTTNSELGFDYLRDNMVRNYRDKKIRGLHFAIVDEGDSILIDEARTPLIISGQPKKDFRMYFDADKFVETLSESDYKIDPESRSPSLTEKGITKAEKHFKINNLFDLENSDLFHKIGNALTARKIFQNGKEYIVRDDKILIVDHFTGRILEGRSYNGGLHQAVQAKERVPIEAENVVVATVTYQSFFRMYKKLAAVSGTALTESEEFLKIYNMVVVPVPTNRPVIRKDHPDFMFGNLKTKWEAVVNEIEKIHKTGQPILVGTGSVEDSETLHQMLLEKNIMHEVLNAKNHAREAHIIAKAGEVGSVTISTNMAGRGTDIKLGKGAKELGGLYVIGTERHESRRIDNQLRGRSGRQGDIGESRFFISFGDPLFKRFAQDRILKAQEKLASDYFDSKFFSRFLTMTQKKVESVNFDMRKNLIDYDHVLANQRELIYKQRDKILIASDLTEVVDRMAQNFVEGFVETFKDQANQTMVNPIELSIAVQKELLQGEEVTASQFYNQTLLAAKQTVLKLVKDAISKKIEVMTVGIANNVFRDIIIQQMDDAWIHHLDQMLKLREGVSLRSLEQTSPLNIYVEESKKLFDLMLNKIAKNVILAVCAIINPTRNVDINVEQEHRRLEALKRLEEIKKLEELQNNNNEPAKVLFKFPDQHGNMIEREVPVDNLIQLVDGQIIQAQVAEEPKQELNQLEKADQLDQTLIEAKLAEQQEQKNNSATDK.

ATP contacts are provided by residues Gln85, 103–107 (GEGKT), and Asp491.

This sequence belongs to the SecA family. In terms of assembly, monomer and homodimer. Part of the essential Sec protein translocation apparatus which comprises SecA, SecYEG and auxiliary proteins SecDF. Other proteins may also be involved.

It localises to the cell membrane. It is found in the cytoplasm. The catalysed reaction is ATP + H2O + cellular proteinSide 1 = ADP + phosphate + cellular proteinSide 2.. In terms of biological role, part of the Sec protein translocase complex. Interacts with the SecYEG preprotein conducting channel. Has a central role in coupling the hydrolysis of ATP to the transfer of proteins into and across the cell membrane, serving as an ATP-driven molecular motor driving the stepwise translocation of polypeptide chains across the membrane. The polypeptide is Protein translocase subunit SecA (Mycoplasmoides gallisepticum (strain R(low / passage 15 / clone 2)) (Mycoplasma gallisepticum)).